Reading from the N-terminus, the 33-residue chain is Cytochrome b6-f complex subunit 8 (33 aa).

The chain crosses the membrane as a helical span at residues 2-22 (LFTFAWASLAAIFTFSIAMVV).

The protein belongs to the PetN family. In terms of assembly, the 4 large subunits of the cytochrome b6-f complex are cytochrome b6, subunit IV (17 kDa polypeptide, PetD), cytochrome f and the Rieske protein, while the 4 small subunits are PetG, PetL, PetM and PetN. The complex functions as a dimer.

It localises to the cellular thylakoid membrane. Functionally, component of the cytochrome b6-f complex, which mediates electron transfer between photosystem II (PSII) and photosystem I (PSI), cyclic electron flow around PSI, and state transitions. In Prochlorococcus marinus (strain MIT 9211), this protein is Cytochrome b6-f complex subunit 8.